A 279-amino-acid chain; its full sequence is Dihydropteroate synthase type-1 (279 aa).

One can recognise a Pterin-binding domain in the interval 1-258 (MVTVFGILNL…APGDLRSAIT (258 aa)). Residue Asn9 participates in Mg(2+) binding. (7,8-dihydropterin-6-yl)methyl diphosphate contacts are provided by residues Asp82, Asn101, Asp173, Lys212, and 246-248 (RTH).

It belongs to the DHPS family. In terms of assembly, homodimer or homotrimer. Mg(2+) is required as a cofactor.

The enzyme catalyses (7,8-dihydropterin-6-yl)methyl diphosphate + 4-aminobenzoate = 7,8-dihydropteroate + diphosphate. It participates in cofactor biosynthesis; tetrahydrofolate biosynthesis; 7,8-dihydrofolate from 2-amino-4-hydroxy-6-hydroxymethyl-7,8-dihydropteridine diphosphate and 4-aminobenzoate: step 1/2. Functionally, catalyzes the condensation of para-aminobenzoate (pABA) with 6-hydroxymethyl-7,8-dihydropterin diphosphate (DHPt-PP) to form 7,8-dihydropteroate (H2Pte), the immediate precursor of folate derivatives. The polypeptide is Dihydropteroate synthase type-1 (sulI) (Corynebacterium glutamicum (Brevibacterium saccharolyticum)).